An 881-amino-acid chain; its full sequence is Mechanosensitive ion channel protein 5 (881 aa).

2 stretches are compositionally biased toward basic and acidic residues: residues 1–12 (MAAVDSTDRRDF) and 48–59 (DGEKGKNDKKGD). Residues 1–248 (MAAVDSTDRR…RNGFEEEEEE (248 aa)) are disordered. The segment covering 115-145 (ELQSNTPPRPATASNTPRRGLTTISESSSPV) has biased composition (polar residues). A compositionally biased stretch (basic and acidic residues) spans 169-179 (EEGRNRDEAEV). Ser-231 carries the post-translational modification Phosphoserine. The next 6 helical transmembrane spans lie at 265-285 (LSFWVFLEWISLVLIVTSLVC), 309-329 (VLVLICGRLVSSWIVRIIVFL), 349-369 (KSVQNCLWLGLVLLAWHFLFD), 387-407 (VLVCLLVALIIWLVKTILVKV), 642-662 (IINVVIGIIIIIIWLLILGIA), and 677-697 (VAFVFGNSCKTIFEAIIFLFV). A disordered region spans residues 861–881 (PTANPTSSDRIPPSWMQQRGP). Residues 864–881 (NPTSSDRIPPSWMQQRGP) are compositionally biased toward polar residues.

It belongs to the MscS (TC 1.A.23) family.

The protein resides in the membrane. Its function is as follows. Mechanosensitive channel that opens in response to stretch forces in the membrane lipid bilayer. This Arabidopsis thaliana (Mouse-ear cress) protein is Mechanosensitive ion channel protein 5 (MSL5).